We begin with the raw amino-acid sequence, 428 residues long: D-inositol 3-phosphate glycosyltransferase (428 aa).

H5 serves as a coordination point for 1D-myo-inositol 3-phosphate. Residues 11–12 (QP) and G19 each bind UDP-N-acetyl-alpha-D-glucosamine. 1D-myo-inositol 3-phosphate is bound by residues 16-21 (DAGGMN), K74, Y107, T131, and R151. The UDP-N-acetyl-alpha-D-glucosamine site is built by R225, K230, and Q283. Residues F292, Q293, and A295 each contribute to the Mg(2+) site. Residues E305 and E313 each contribute to the UDP-N-acetyl-alpha-D-glucosamine site. T319 is a binding site for Mg(2+).

The protein belongs to the glycosyltransferase group 1 family. MshA subfamily. As to quaternary structure, homodimer.

The enzyme catalyses 1D-myo-inositol 3-phosphate + UDP-N-acetyl-alpha-D-glucosamine = 1D-myo-inositol 2-acetamido-2-deoxy-alpha-D-glucopyranoside 3-phosphate + UDP + H(+). Its function is as follows. Catalyzes the transfer of a N-acetyl-glucosamine moiety to 1D-myo-inositol 3-phosphate to produce 1D-myo-inositol 2-acetamido-2-deoxy-glucopyranoside 3-phosphate in the mycothiol biosynthesis pathway. The polypeptide is D-inositol 3-phosphate glycosyltransferase (Mycobacterium leprae (strain Br4923)).